Consider the following 23-residue polypeptide: Alyteserin-1c (23 aa).

Ser23 bears the Serine amide mark.

In terms of tissue distribution, expressed by the skin glands.

Its subcellular location is the secreted. It is found in the target cell membrane. In terms of biological role, antibacterial peptide with amphipathic alpha-helical structure that shows selective growth-inhibitory activity against Gram-negative bacteria but low hemolytic activity against human erythrocytes (LC(50)=145-220 uM). It is moderately active against the Gram-negative bacteria E.coli (MIC=25 uM), K.pneumoniae (MIC=50 uM), P.aeruginosa (MIC=25 uM), A.baumannii (MIC=6 uM), and is weaky active against the Gram-positive S.aureus (MIC=100-250 uM). This is Alyteserin-1c from Alytes obstetricans (Common midwife toad).